The sequence spans 158 residues: Small ribosomal subunit protein uS19 (158 aa).

This sequence belongs to the universal ribosomal protein uS19 family.

Functionally, protein S19 forms a complex with S13 that binds strongly to the 16S ribosomal RNA. The sequence is that of Small ribosomal subunit protein uS19 from Pyrobaculum neutrophilum (strain DSM 2338 / JCM 9278 / NBRC 100436 / V24Sta) (Thermoproteus neutrophilus).